The sequence spans 185 residues: Peroxynitrite isomerase (185 aa).

Positions Met-1–Ala-21 are disordered. A GXWXGXG motif is present at residues Gly-34–Gly-40. His-171 serves as a coordination point for heme b.

The protein belongs to the nitrobindin family. As to quaternary structure, homodimer. Requires heme b as cofactor.

The enzyme catalyses peroxynitrite = nitrate. It functions in the pathway nitrogen metabolism. Its function is as follows. Heme-binding protein able to scavenge peroxynitrite and to protect free L-tyrosine against peroxynitrite-mediated nitration, by acting as a peroxynitrite isomerase that converts peroxynitrite to nitrate. Therefore, this protein likely plays a role in peroxynitrite sensing and in the detoxification of reactive nitrogen and oxygen species (RNS and ROS, respectively). Is able to bind nitric oxide (NO) in vitro, but may act as a sensor of peroxynitrite levels in vivo. The sequence is that of Peroxynitrite isomerase from Streptomyces griseus subsp. griseus (strain JCM 4626 / CBS 651.72 / NBRC 13350 / KCC S-0626 / ISP 5235).